Consider the following 54-residue polypeptide: UPF0391 membrane protein Bpro_0879 (54 aa).

The next 2 membrane-spanning stretches (helical) occupy residues V6–G26 and I30–L50.

The protein belongs to the UPF0391 family.

The protein localises to the cell membrane. The sequence is that of UPF0391 membrane protein Bpro_0879 from Polaromonas sp. (strain JS666 / ATCC BAA-500).